A 204-amino-acid chain; its full sequence is Serotype 3 fimbrial subunit (204 aa).

Positions 1–25 are cleaved as a signal peptide; that stretch reads MSKFSYPALRAALILAASPVLPALA. Cysteine 41 and cysteine 84 are joined by a disulfide.

It belongs to the fimbrial protein family.

Its subcellular location is the fimbrium. Bordetella pertussis is the causative agent of whooping cough. An essential step in the disease process is the attachment of the bacteria to the ciliated epithelium of the respiratory tract, enabling the organism to resist normal host-clearance mechanisms. It is unclear which bacterial cell surface component are responsible for adherence but the fimbriae of B.pertussis are prime candidates for being involved in this process. The protein is Serotype 3 fimbrial subunit (fim3) of Bordetella pertussis (strain Tohama I / ATCC BAA-589 / NCTC 13251).